The chain runs to 351 residues: Quinolinate phosphoribosyltransferase [decarboxylating] 2a, mitochondrial (351 aa).

Substrate-binding positions include Arg-142, 173-175, Arg-197, Lys-207, Glu-240, Asp-267, 299-301, and 320-322; these read TRK, SGN, and SGA.

This sequence belongs to the NadC/ModD family. In terms of tissue distribution, expressed in roots and flowers.

The protein localises to the mitochondrion. It carries out the reaction nicotinate beta-D-ribonucleotide + CO2 + diphosphate = quinolinate + 5-phospho-alpha-D-ribose 1-diphosphate + 2 H(+). Its pathway is alkaloid biosynthesis; nicotine biosynthesis. It functions in the pathway cofactor biosynthesis; NAD(+) biosynthesis; nicotinate D-ribonucleotide from quinolinate: step 1/1. In terms of biological role, involved in the biosynthesis of pyridine alkaloid natural products, leading mainly to the production of anabasine, anatabine, nicotine and nornicotine, effective deterrents against herbivores with antiparasitic and pesticide properties (neurotoxins); nornicotine serves as the precursor in the synthesis of the carcinogen compound N'-nitrosonornicotine (NNN). Involved in the catabolism of quinolinic acid (QA). The sequence is that of Quinolinate phosphoribosyltransferase [decarboxylating] 2a, mitochondrial from Nicotiana tabacum (Common tobacco).